The chain runs to 510 residues: NAD(P)H-quinone oxidoreductase subunit 2, chloroplastic (510 aa).

A run of 12 helical transmembrane segments spans residues 24–44, 59–79, 99–119, 124–144, 149–169, 183–203, 229–249, 295–315, 323–343, 354–374, 395–415, and 418–438; these read LLLF…GLIL, WFYF…LFRW, IFQF…VEYI, MAIT…MFLC, LITI…LSGY, YLLM…WLYG, ISIA…PAPF, WHLL…LIAI, MLAY…IVGD, YMLF…LFGL, ALSS…AGFF, and LHLF…IGLL.

Belongs to the complex I subunit 2 family. As to quaternary structure, NDH is composed of at least 16 different subunits, 5 of which are encoded in the nucleus.

Its subcellular location is the plastid. It localises to the chloroplast thylakoid membrane. It catalyses the reaction a plastoquinone + NADH + (n+1) H(+)(in) = a plastoquinol + NAD(+) + n H(+)(out). The enzyme catalyses a plastoquinone + NADPH + (n+1) H(+)(in) = a plastoquinol + NADP(+) + n H(+)(out). NDH shuttles electrons from NAD(P)H:plastoquinone, via FMN and iron-sulfur (Fe-S) centers, to quinones in the photosynthetic chain and possibly in a chloroplast respiratory chain. The immediate electron acceptor for the enzyme in this species is believed to be plastoquinone. Couples the redox reaction to proton translocation, and thus conserves the redox energy in a proton gradient. In Ensete ventricosum (Abyssinian banana), this protein is NAD(P)H-quinone oxidoreductase subunit 2, chloroplastic.